A 179-amino-acid polypeptide reads, in one-letter code: ATP-dependent protease subunit HslV (179 aa).

Thr-5 is a catalytic residue. Positions 164, 167, and 170 each coordinate Na(+).

Belongs to the peptidase T1B family. HslV subfamily. As to quaternary structure, a double ring-shaped homohexamer of HslV is capped on each side by a ring-shaped HslU homohexamer. The assembly of the HslU/HslV complex is dependent on binding of ATP.

The protein localises to the cytoplasm. It carries out the reaction ATP-dependent cleavage of peptide bonds with broad specificity.. Its activity is regulated as follows. Allosterically activated by HslU binding. In terms of biological role, protease subunit of a proteasome-like degradation complex believed to be a general protein degrading machinery. The chain is ATP-dependent protease subunit HslV from Verminephrobacter eiseniae (strain EF01-2).